The primary structure comprises 62 residues: Chromatin protein Cren7 (62 aa).

It belongs to the Cren7 family. As to quaternary structure, monomer. Methylated at multiple sites, to varying extents.

The protein resides in the chromosome. It is found in the cytoplasm. Functionally, a chromatin protein, binds double-stranded DNA without sequence specificity. Constrains negative DNA supercoils. In Staphylothermus marinus (strain ATCC 43588 / DSM 3639 / JCM 9404 / F1), this protein is Chromatin protein Cren7.